Here is a 230-residue protein sequence, read N- to C-terminus: Small ribosomal subunit protein uS3 (230 aa).

Positions 39-107 (VREYLFKRLK…PVHINIEEVR (69 aa)) constitute a KH type-2 domain.

It belongs to the universal ribosomal protein uS3 family. In terms of assembly, part of the 30S ribosomal subunit. Forms a tight complex with proteins S10 and S14.

Binds the lower part of the 30S subunit head. Binds mRNA in the 70S ribosome, positioning it for translation. The polypeptide is Small ribosomal subunit protein uS3 (Alcanivorax borkumensis (strain ATCC 700651 / DSM 11573 / NCIMB 13689 / SK2)).